The chain runs to 883 residues: Histidine--tRNA ligase, cytoplasmic (883 aa).

It belongs to the class-II aminoacyl-tRNA synthetase family.

Its subcellular location is the cytoplasm. The protein resides in the cytosol. It carries out the reaction tRNA(His) + L-histidine + ATP = L-histidyl-tRNA(His) + AMP + diphosphate + H(+). This is Histidine--tRNA ligase, cytoplasmic from Arabidopsis thaliana (Mouse-ear cress).